Here is a 116-residue protein sequence, read N- to C-terminus: NADH-ubiquinone oxidoreductase chain 3 (116 aa).

A run of 3 helical transmembrane segments spans residues 3–23, 56–76, and 87–107; these read LITT…TVSF, FFLI…LLPL, and LTLV…IYEW.

Belongs to the complex I subunit 3 family.

The protein localises to the mitochondrion membrane. It carries out the reaction a ubiquinone + NADH + 5 H(+)(in) = a ubiquinol + NAD(+) + 4 H(+)(out). In terms of biological role, core subunit of the mitochondrial membrane respiratory chain NADH dehydrogenase (Complex I) that is believed to belong to the minimal assembly required for catalysis. Complex I functions in the transfer of electrons from NADH to the respiratory chain. The immediate electron acceptor for the enzyme is believed to be ubiquinone. In Oncorhynchus kisutch (Coho salmon), this protein is NADH-ubiquinone oxidoreductase chain 3 (MT-ND3).